A 243-amino-acid chain; its full sequence is Small ribosomal subunit protein uS2 (243 aa).

This sequence belongs to the universal ribosomal protein uS2 family.

The polypeptide is Small ribosomal subunit protein uS2 (Chromobacterium violaceum (strain ATCC 12472 / DSM 30191 / JCM 1249 / CCUG 213 / NBRC 12614 / NCIMB 9131 / NCTC 9757 / MK)).